A 162-amino-acid polypeptide reads, in one-letter code: Protein cornichon homolog 2 (162 aa).

Residues 1-10 lie on the Cytoplasmic side of the membrane; the sequence is MAFTFAAFCY. A helical membrane pass occupies residues 11–31; the sequence is MLTLVLCASLIFFIIWHIIAF. At 32–72 the chain is on the lumenal side; it reads DELRTDFKNPIEQGNPSRARERVKNVERICCLLRKLVVPEY. A helical transmembrane segment spans residues 73 to 93; it reads CIHGLFCLMFMCAAEWVTLGL. Residues 94-138 lie on the Cytoplasmic side of the membrane; it reads NIPLLFYHLWRYFHRPADGSEVMFDPVSIMNVDILNYCQKEAWCK. A helical transmembrane segment spans residues 139-161; that stretch reads LAFYLLSFFYYLYRVGATVRYVS. A topological domain (lumenal) is located at residue alanine 162.

The protein belongs to the cornichon family.

It localises to the membrane. In terms of biological role, regulates the trafficking and gating properties of AMPA-selective glutamate receptors (AMPARs). In Xenopus tropicalis (Western clawed frog), this protein is Protein cornichon homolog 2 (cnih2).